Reading from the N-terminus, the 1101-residue chain is Serine/threonine-protein kinase PSK2 (1101 aa).

At threonine 118 the chain carries Phosphothreonine. The Protein kinase domain maps to 841–1099 (FTILQVMGEG…IDEIYEDKWL (259 aa)). ATP-binding positions include 847–855 (MGEGAYGKV) and lysine 870. Aspartate 975 acts as the Proton acceptor in catalysis.

This sequence belongs to the protein kinase superfamily. Ser/Thr protein kinase family.

The protein localises to the cytoplasm. The catalysed reaction is L-seryl-[protein] + ATP = O-phospho-L-seryl-[protein] + ADP + H(+). The enzyme catalyses L-threonyl-[protein] + ATP = O-phospho-L-threonyl-[protein] + ADP + H(+). In terms of biological role, serine/threonine-protein kinase involved in the control of sugar metabolism and translation. Phosphorylates UGP1, which is required for normal glycogen and beta-(1,6)-glucan synthesis. This phosphorylation shifts glucose partitioning toward cell wall glucan synthesis at the expense of glycogen synthesis. Also phosphorylates the glycogen synthase GSY2 and the translation factors CAF20, TIF11 and SRO9. The protein is Serine/threonine-protein kinase PSK2 (PSK2) of Saccharomyces cerevisiae (strain ATCC 204508 / S288c) (Baker's yeast).